Here is a 303-residue protein sequence, read N- to C-terminus: Ribosomal RNA small subunit methyltransferase A (303 aa).

A compositionally biased stretch (low complexity) spans 1-19 (MSSRPPASFSATFSAARSS). Residues 1–34 (MSSRPPASFSATFSAARSSKCVPPPRRPSTDVSL) form a disordered region. His55, Leu57, Gly82, Glu104, Asp130, and Asn149 together coordinate S-adenosyl-L-methionine.

This sequence belongs to the class I-like SAM-binding methyltransferase superfamily. rRNA adenine N(6)-methyltransferase family. RsmA subfamily.

It localises to the cytoplasm. The catalysed reaction is adenosine(1518)/adenosine(1519) in 16S rRNA + 4 S-adenosyl-L-methionine = N(6)-dimethyladenosine(1518)/N(6)-dimethyladenosine(1519) in 16S rRNA + 4 S-adenosyl-L-homocysteine + 4 H(+). Functionally, specifically dimethylates two adjacent adenosines (A1518 and A1519) in the loop of a conserved hairpin near the 3'-end of 16S rRNA in the 30S particle. May play a critical role in biogenesis of 30S subunits. The protein is Ribosomal RNA small subunit methyltransferase A of Gluconobacter oxydans (strain 621H) (Gluconobacter suboxydans).